Here is a 692-residue protein sequence, read N- to C-terminus: Elongation factor G (692 aa).

The tr-type G domain occupies 8-282 (ENTRNIGIMA…GVVDYLPSPV (275 aa)). Residues 17–24 (AHIDAGKT), 81–85 (DTPGH), and 135–138 (NKMD) each bind GTP.

It belongs to the TRAFAC class translation factor GTPase superfamily. Classic translation factor GTPase family. EF-G/EF-2 subfamily.

It is found in the cytoplasm. In terms of biological role, catalyzes the GTP-dependent ribosomal translocation step during translation elongation. During this step, the ribosome changes from the pre-translocational (PRE) to the post-translocational (POST) state as the newly formed A-site-bound peptidyl-tRNA and P-site-bound deacylated tRNA move to the P and E sites, respectively. Catalyzes the coordinated movement of the two tRNA molecules, the mRNA and conformational changes in the ribosome. In Geobacillus sp. (strain WCH70), this protein is Elongation factor G.